We begin with the raw amino-acid sequence, 83 residues long: UPF0297 protein LEUM_0557 (83 aa).

It belongs to the UPF0297 family.

The polypeptide is UPF0297 protein LEUM_0557 (Leuconostoc mesenteroides subsp. mesenteroides (strain ATCC 8293 / DSM 20343 / BCRC 11652 / CCM 1803 / JCM 6124 / NCDO 523 / NBRC 100496 / NCIMB 8023 / NCTC 12954 / NRRL B-1118 / 37Y)).